The following is a 214-amino-acid chain: Riboflavin kinase (214 aa).

Residues 1–91 (MRSIMEVETL…YCSIFEDGGA (91 aa)) are H-T-H motif-like. Positions 92 to 214 (PVMRGKVVTG…DGDEVEVTLE (123 aa)) are riboflavin kinase. 101–106 (GLGEGQ) lines the CDP pocket. Mg(2+) is bound by residues Thr-130 and Asn-132. Residues Thr-182 and Glu-190 each coordinate FMN. 195 to 198 (IKLR) contacts CDP.

It belongs to the archaeal riboflavin kinase family. Mg(2+) serves as cofactor.

It catalyses the reaction riboflavin + CTP = CDP + FMN + H(+). It functions in the pathway cofactor biosynthesis; FMN biosynthesis; FMN from riboflavin (CTP route): step 1/1. In terms of biological role, catalyzes the CTP-dependent phosphorylation of riboflavin (vitamin B2) to form flavin mononucleotide (FMN). The chain is Riboflavin kinase (ribK) from Methanocella arvoryzae (strain DSM 22066 / NBRC 105507 / MRE50).